Consider the following 1682-residue polypeptide: 1-phosphatidylinositol 4,5-bisphosphate phosphodiesterase eta-1 (1682 aa).

Positions S20–A128 constitute a PH domain. EF-hand domains are found at residues T142–N177, L178–R214, and D226–M246. Ca(2+)-binding residues include D155, N157, D159, and E166. Residues Q299–K444 form the PI-PLC X-box domain. H314 is an active-site residue. Positions 315, 344, and 346 each coordinate Ca(2+). H358 is a catalytic residue. E393 contributes to the Ca(2+) binding site. 2 residues coordinate substrate: K442 and K444. The segment at L534 to R588 is disordered. Residues G553–S564 show a composition bias toward basic residues. The PI-PLC Y-box domain occupies L602 to C715. Substrate contacts are provided by S628 and R655. The 129-residue stretch at K716–G844 folds into the C2 domain. Ca(2+) contacts are provided by I759, D761, D785, D814, H815, and D816. Positions D992–H1018 are enriched in basic and acidic residues. Disordered regions lie at residues D992–R1083, N1296–V1321, and R1581–V1603. The segment covering F1019 to L1033 has biased composition (low complexity). Composition is skewed to polar residues over residues Q1040–E1050 and N1065–H1074. Over residues R1581–K1590 the composition is skewed to basic and acidic residues.

Ca(2+) is required as a cofactor. In terms of tissue distribution, expressed in brain and to a lower extent in lung. In brain, it is found in cerebrum, cerebellum and spinal cord.

It is found in the cytoplasm. The protein localises to the membrane. The enzyme catalyses a 1,2-diacyl-sn-glycero-3-phospho-(1D-myo-inositol-4,5-bisphosphate) + H2O = 1D-myo-inositol 1,4,5-trisphosphate + a 1,2-diacyl-sn-glycerol + H(+). In terms of biological role, the production of the second messenger molecules diacylglycerol (DAG) and inositol 1,4,5-trisphosphate (IP3) is mediated by calcium-activated phosphatidylinositol-specific phospholipase C enzymes. This is 1-phosphatidylinositol 4,5-bisphosphate phosphodiesterase eta-1 from Mus musculus (Mouse).